A 382-amino-acid chain; its full sequence is Galactokinase (382 aa).

Residue 34–37 (EHTD) participates in substrate binding. 124–130 (GAGLSSS) lines the ATP pocket. Residues serine 130 and glutamate 162 each contribute to the Mg(2+) site. Catalysis depends on aspartate 174, which acts as the Proton acceptor. Tyrosine 223 is a substrate binding site.

This sequence belongs to the GHMP kinase family. GalK subfamily.

The protein resides in the cytoplasm. It catalyses the reaction alpha-D-galactose + ATP = alpha-D-galactose 1-phosphate + ADP + H(+). It participates in carbohydrate metabolism; galactose metabolism. In terms of biological role, catalyzes the transfer of the gamma-phosphate of ATP to D-galactose to form alpha-D-galactose-1-phosphate (Gal-1-P). In Escherichia coli O7:K1 (strain IAI39 / ExPEC), this protein is Galactokinase.